The sequence spans 156 residues: Peptidyl-prolyl cis-trans isomerase cypE (156 aa).

One can recognise a PPIase cyclophilin-type domain in the interval 2–155 (TEQTVTLQTT…DEIRIIKATA (154 aa)).

Belongs to the cyclophilin-type PPIase family. Interacts with snwA.

Its subcellular location is the cytoplasm. The protein localises to the nucleus. It catalyses the reaction [protein]-peptidylproline (omega=180) = [protein]-peptidylproline (omega=0). Functionally, catalyzes the cis-trans isomerization of proline imidic peptide bonds in oligopeptides. Plays a role in protein folding, transport and assembly. In Dictyostelium discoideum (Social amoeba), this protein is Peptidyl-prolyl cis-trans isomerase cypE (cypE).